Consider the following 109-residue polypeptide: Glutaredoxin-C13 (109 aa).

A Glutaredoxin domain is found at 2 to 108; that stretch reads AEMVARLASE…PMLKNAGALW (107 aa). A disulfide bridge connects residues C22 and C25. The Responsive for interaction with TGA factors motif lies at 106 to 109; that stretch reads ALWL.

The protein belongs to the glutaredoxin family. CC-type subfamily.

It is found in the cytoplasm. The protein localises to the nucleus. Functionally, has a glutathione-disulfide oxidoreductase activity in the presence of NADPH and glutathione reductase. Reduces low molecular weight disulfides and proteins. This chain is Glutaredoxin-C13 (GRXC13), found in Oryza sativa subsp. japonica (Rice).